The primary structure comprises 240 residues: Purine nucleoside phosphorylase RC0672 (240 aa).

H60, C96, and H113 together coordinate Zn(2+).

Belongs to the purine nucleoside phosphorylase YfiH/LACC1 family. In terms of assembly, homodimer. Requires Cu(2+) as cofactor. Zn(2+) is required as a cofactor.

It carries out the reaction adenosine + phosphate = alpha-D-ribose 1-phosphate + adenine. The enzyme catalyses S-methyl-5'-thioadenosine + phosphate = 5-(methylsulfanyl)-alpha-D-ribose 1-phosphate + adenine. It catalyses the reaction inosine + phosphate = alpha-D-ribose 1-phosphate + hypoxanthine. The catalysed reaction is adenosine + H2O + H(+) = inosine + NH4(+). Purine nucleoside enzyme that catalyzes the phosphorolysis of adenosine and inosine nucleosides, yielding D-ribose 1-phosphate and the respective free bases, adenine and hypoxanthine. Also catalyzes the phosphorolysis of S-methyl-5'-thioadenosine into adenine and S-methyl-5-thio-alpha-D-ribose 1-phosphate. Also has adenosine deaminase activity. The protein is Purine nucleoside phosphorylase RC0672 of Rickettsia conorii (strain ATCC VR-613 / Malish 7).